A 1252-amino-acid polypeptide reads, in one-letter code: Myosin-1 (1252 aa).

The segment at M1–A27 is disordered. One can recognise a Myosin motor domain in the interval V38 to D712. G128–T135 lines the ATP pocket. Phosphoserine is present on S356. The actin-binding stretch occupies residues I403–A485. IQ domains follow at residues H716–C736 and A737–Q762. The TH1 domain maps to R770–P953. Disordered stretches follow at residues V945–P1049 and P1103–A1228. Pro residues-rich tracts occupy residues R989 to Q999 and R1028 to P1046. In terms of domain architecture, SH3 spans P1046–P1104. The span at A1162 to I1175 shows a compositional bias: polar residues. The span at K1178–P1193 shows a compositional bias: pro residues. The span at V1194 to P1203 shows a compositional bias: low complexity. Positions A1204–P1215 are enriched in pro residues. A compositionally biased stretch (low complexity) spans A1216–A1228.

It belongs to the TRAFAC class myosin-kinesin ATPase superfamily. Myosin family. Phosphorylation of the TEDS site (Ser-356) is required for the polarization of the actin cytoskeleton. Phosphorylation probably activates the myosin-I ATPase activity.

The protein localises to the cytoplasm. Its subcellular location is the cytoskeleton. It is found in the actin patch. Type-I myosin implicated in the organization of the actin cytoskeleton. Required for proper actin cytoskeleton polarization. At the cell cortex, assembles in patch-like structures together with proteins from the actin-polymerizing machinery and promotes actin assembly. Functions as actin nucleation-promoting factor (NPF) for the Arp2/3 complex. This Laccaria bicolor (strain S238N-H82 / ATCC MYA-4686) (Bicoloured deceiver) protein is Myosin-1 (MYO1).